The chain runs to 617 residues: 1-deoxy-D-xylulose-5-phosphate synthase (617 aa).

Thiamine diphosphate contacts are provided by residues histidine 77 and glycine 118–serine 120. Residue aspartate 149 participates in Mg(2+) binding. Thiamine diphosphate is bound by residues glycine 150–alanine 151, asparagine 178, tyrosine 287, and glutamate 368. Mg(2+) is bound at residue asparagine 178.

The protein belongs to the transketolase family. DXPS subfamily. Homodimer. Requires Mg(2+) as cofactor. It depends on thiamine diphosphate as a cofactor.

It carries out the reaction D-glyceraldehyde 3-phosphate + pyruvate + H(+) = 1-deoxy-D-xylulose 5-phosphate + CO2. The protein operates within metabolic intermediate biosynthesis; 1-deoxy-D-xylulose 5-phosphate biosynthesis; 1-deoxy-D-xylulose 5-phosphate from D-glyceraldehyde 3-phosphate and pyruvate: step 1/1. Catalyzes the acyloin condensation reaction between C atoms 2 and 3 of pyruvate and glyceraldehyde 3-phosphate to yield 1-deoxy-D-xylulose-5-phosphate (DXP). This is 1-deoxy-D-xylulose-5-phosphate synthase from Haemophilus ducreyi (strain 35000HP / ATCC 700724).